The primary structure comprises 332 residues: 2,3-diketo-L-gulonate reductase (332 aa).

The active-site Proton donor is His-44. Residues Ile-168–Ser-174, Trp-224–Lys-225, and Gly-304–Glu-306 each bind NAD(+).

It belongs to the LDH2/MDH2 oxidoreductase family. DlgD subfamily. Homodimer.

Its subcellular location is the cytoplasm. The enzyme catalyses 3-dehydro-L-gulonate + NAD(+) = 2,3-dioxo-L-gulonate + NADH + H(+). It carries out the reaction 3-dehydro-L-gulonate + NADP(+) = 2,3-dioxo-L-gulonate + NADPH + H(+). In terms of biological role, catalyzes the reduction of 2,3-diketo-L-gulonate in the presence of NADH, to form 3-keto-L-gulonate. The chain is 2,3-diketo-L-gulonate reductase from Mannheimia succiniciproducens (strain KCTC 0769BP / MBEL55E).